We begin with the raw amino-acid sequence, 251 residues long: Membrane-anchored junction protein (251 aa).

The Nuclear segment spans residues methionine 1–proline 227. The disordered stretch occupies residues arginine 140 to lysine 225. Residues glutamate 183 to threonine 198 are compositionally biased toward polar residues. Residues alanine 228–phenylalanine 246 traverse the membrane as a helical segment. Over arginine 247–glutamine 251 the chain is Perinuclear space.

This sequence belongs to the MAJIN family. In terms of assembly, component of the MAJIN-TERB1-TERB2 complex, composed of MAJIN, TERB1 and TERB2.

It localises to the nucleus inner membrane. Its subcellular location is the chromosome. It is found in the telomere. In terms of biological role, meiosis-specific telomere-associated protein involved in meiotic telomere attachment to the nucleus inner membrane, a crucial step for homologous pairing and synapsis. Component of the MAJIN-TERB1-TERB2 complex, which promotes telomere cap exchange by mediating attachment of telomeric DNA to the inner nuclear membrane and replacement of the protective cap of telomeric chromosomes: in early meiosis, the MAJIN-TERB1-TERB2 complex associates with telomeric DNA and the shelterin/telosome complex. During prophase, the complex matures and promotes release of the shelterin/telosome complex from telomeric DNA. In the complex, MAJIN acts as the anchoring subunit to the nucleus inner membrane. MAJIN shows DNA-binding activity, possibly for the stabilization of telomere attachment on the nucleus inner membrane. The sequence is that of Membrane-anchored junction protein from Rattus norvegicus (Rat).